We begin with the raw amino-acid sequence, 470 residues long: Sorting nexin-17 (470 aa).

The PX domain maps to 1–109 (MHFSIPETES…SFLRRAQQET (109 aa)). A 1,2-diacyl-sn-glycero-3-phospho-(1D-myo-inositol-3-phosphate) is bound by residues R36, S38, K62, and R75. The Ras-associating domain maps to 115-206 (EEVSLEVLLS…YKIVLRKSYW (92 aa)). Residues 115–432 (EEVSLEVLLS…DATRESMVKL (318 aa)) form an FERM-like region. The tract at residues 270 to 432 (GYLRFDACVA…DATRESMVKL (163 aa)) is PTB-like F3 module. S336, S407, S409, S415, S421, S437, and S440 each carry phosphoserine. Positions 401–426 (GGTLRRSDSQQAVKSPPLLESPDATR) are disordered. Residues 458 to 470 (GNFAFEGIGDEDL) are interacts with the retriever complex.

This sequence belongs to the sorting nexin family. As to quaternary structure, monomer. Interacts with APP (via cytoplasmic YXNPXY motif). Interacts with KIF1B. Interacts with the C-termini of P-selectin, PTC, LDLR, VLDLR, LRP1 and LRP8. Interacts with KRIT1 (via N-terminus). Interacts with HRAS. Interacts with ITGB1 and ITGB5 (via NPxY motif). Interacts with CCDC22 and CCDC93; the interaction associates SNX17 with the CCC complex. Interacts (via C-terminus) with VPS26C and VPS35L; the interactions are direct and associate SNX17 with the retriever complex.

It localises to the cytoplasm. The protein localises to the early endosome. Its subcellular location is the cytoplasmic vesicle membrane. Its function is as follows. Critical regulator of endosomal recycling of numerous surface proteins, including integrins, signaling receptor and channels. Binds to NPxY sequences in the cytoplasmic tails of target cargos. Associates with retriever and CCC complexes to prevent lysosomal degradation and promote cell surface recycling of numerous cargos such as integrins ITGB1, ITGB5 and their associated alpha subunits. Also required for maintenance of normal cell surface levels of APP and LRP1. Interacts with membranes containing phosphatidylinositol 3-phosphate (PtdIns(3P)). The chain is Sorting nexin-17 (SNX17) from Homo sapiens (Human).